We begin with the raw amino-acid sequence, 319 residues long: Ribonucleoside-diphosphate reductase small chain (319 aa).

Residues D70, E101, and H104 each coordinate Fe cation. Y108 is a catalytic residue. E163, E197, and H200 together coordinate Fe cation. The tract at residues 313–319 (FSLDVDF) is interaction with R1.

It belongs to the ribonucleoside diphosphate reductase small chain family. In terms of assembly, interacts with RNR1/OPG080 subunit. Can interact with host RNR1 supunit. Fe cation is required as a cofactor.

The catalysed reaction is a 2'-deoxyribonucleoside 5'-diphosphate + [thioredoxin]-disulfide + H2O = a ribonucleoside 5'-diphosphate + [thioredoxin]-dithiol. Ribonucleoside-diphosphate reductase holoenzyme provides the precursors necessary for viral DNA synthesis. Allows virus growth in non-dividing cells. Catalyzes the biosynthesis of deoxyribonucleotides from the corresponding ribonucleotides. The protein is Ribonucleoside-diphosphate reductase small chain (OPG048) of Vaccinia virus (strain Ankara) (VACV).